Reading from the N-terminus, the 341-residue chain is Mitochondrial transcription factor 1 (341 aa).

Residues L23, E77, D101, and N137 each contribute to the S-adenosyl-L-methionine site.

This sequence belongs to the class I-like SAM-binding methyltransferase superfamily. rRNA adenine N(6)-methyltransferase family.

Its subcellular location is the mitochondrion intermembrane space. Its function is as follows. Mitochondrial transcription factor that confers selective promoter recognition on the core subunit of the yeast mitochondrial RNA polymerase. Interacts with DNA in a non-specific manner. The sequence is that of Mitochondrial transcription factor 1 (MTF1) from Saccharomyces cerevisiae (strain ATCC 204508 / S288c) (Baker's yeast).